We begin with the raw amino-acid sequence, 428 residues long: Forkhead box protein B2 (428 aa).

Residues 12 to 103 constitute a DNA-binding region (fork-head); it reads QKPPYSYISL…GDMFENGSFL (92 aa). 2 disordered regions span residues 118-217 and 408-428; these read HLHS…MQEA and PTAAGRADSKGSSLHSVLVHS. The span at 136–163 shows a compositional bias: basic residues; the sequence is LHPHHPHHAHHHHHHHHHAAHHHHHHHP. Composition is skewed to pro residues over residues 164–174 and 183–192; these read PQPPPPPPPHM and APAPQPPHLP. Low complexity predominate over residues 193-217; that stretch reads SQPAQQPQPQSQPPQTSHPGKMQEA.

It localises to the nucleus. In terms of biological role, transcription factor. The protein is Forkhead box protein B2 (Foxb2) of Mus musculus (Mouse).